Here is a 131-residue protein sequence, read N- to C-terminus: Predicted GPI-anchored protein 26 (131 aa).

The first 18 residues, 1–18 (MHFSKIIAGSALSSVALA), serve as a signal peptide directing secretion. 2 N-linked (GlcNAc...) asparagine glycosylation sites follow: Asn-22 and Asn-104. Residue Gly-110 is the site of GPI-anchor amidated glycine attachment. The propeptide at 111-131 (AGSKNVASALVGVVAIAAAMM) is removed in mature form.

Its subcellular location is the cell membrane. GPI-anchored protein involved in proper cell wall integrity. Does not seem to be directly involved in the synthesis of the cell wall. Required for normal virulence in a mouse model of disseminated candidiasis. This is Predicted GPI-anchored protein 26 (PGA26) from Candida albicans (strain SC5314 / ATCC MYA-2876) (Yeast).